We begin with the raw amino-acid sequence, 364 residues long: tRNA-specific 2-thiouridylase MnmA 1 (364 aa).

ATP contacts are provided by residues 10–17 (GMSGGVDS) and Met36. Residue Cys106 is the Nucleophile of the active site. Cys106 and Cys204 are oxidised to a cystine. Gly130 contributes to the ATP binding site. Positions 154–156 (KDQ) are interaction with tRNA. Cys204 acts as the Cysteine persulfide intermediate in catalysis. Residues 310 to 311 (RY) are interaction with tRNA.

The protein belongs to the MnmA/TRMU family.

It is found in the cytoplasm. The enzyme catalyses S-sulfanyl-L-cysteinyl-[protein] + uridine(34) in tRNA + AH2 + ATP = 2-thiouridine(34) in tRNA + L-cysteinyl-[protein] + A + AMP + diphosphate + H(+). In terms of biological role, catalyzes the 2-thiolation of uridine at the wobble position (U34) of tRNA, leading to the formation of s(2)U34. The polypeptide is tRNA-specific 2-thiouridylase MnmA 1 (Thermoanaerobacter sp. (strain X514)).